The primary structure comprises 123 residues: Small ribosomal subunit protein uS12 (123 aa).

Asp89 is modified (3-methylthioaspartic acid). A disordered region spans residues 100–123 (GSLDTSGVKDRKQGRSKYGTKRPK). A compositionally biased stretch (basic residues) spans 113–123 (GRSKYGTKRPK).

It belongs to the universal ribosomal protein uS12 family. As to quaternary structure, part of the 30S ribosomal subunit. Contacts proteins S8 and S17. May interact with IF1 in the 30S initiation complex.

Its function is as follows. With S4 and S5 plays an important role in translational accuracy. In terms of biological role, interacts with and stabilizes bases of the 16S rRNA that are involved in tRNA selection in the A site and with the mRNA backbone. Located at the interface of the 30S and 50S subunits, it traverses the body of the 30S subunit contacting proteins on the other side and probably holding the rRNA structure together. The combined cluster of proteins S8, S12 and S17 appears to hold together the shoulder and platform of the 30S subunit. The protein is Small ribosomal subunit protein uS12 of Ectopseudomonas mendocina (strain ymp) (Pseudomonas mendocina).